We begin with the raw amino-acid sequence, 263 residues long: MLIEQITQALTAVRQQKPLVVNITNYVVMNNTANALLAIGASPIMAHSKQEMAEMMSFAGALVINIGTLDSVWTPRMSYAVEQANSNGKIVVLDPVGCGASSLRTETSREIARLANKLIIRGNASEIIALAGEQAQSKGVDALDSSDAALGAAHFLVKEYGASVVISGETDYIVTKEQTVQLNNGHEMMPYVTGMGCTLTALTGAFAAIGDETGLAAAAVLGVVGEIAAEQARGPGSLQMHLLDELYQLDEETLATRLKLQVR.

A substrate-binding site is contributed by Met-45. Arg-121 and Ser-167 together coordinate ATP. Residue Gly-194 participates in substrate binding.

The protein belongs to the Thz kinase family. Mg(2+) is required as a cofactor.

The enzyme catalyses 5-(2-hydroxyethyl)-4-methylthiazole + ATP = 4-methyl-5-(2-phosphooxyethyl)-thiazole + ADP + H(+). The protein operates within cofactor biosynthesis; thiamine diphosphate biosynthesis; 4-methyl-5-(2-phosphoethyl)-thiazole from 5-(2-hydroxyethyl)-4-methylthiazole: step 1/1. Its function is as follows. Catalyzes the phosphorylation of the hydroxyl group of 4-methyl-5-beta-hydroxyethylthiazole (THZ). This chain is Hydroxyethylthiazole kinase, found in Vibrio parahaemolyticus serotype O3:K6 (strain RIMD 2210633).